Reading from the N-terminus, the 408-residue chain is MKQESSFLAKLANGSLVLQILVGIIAGVSLASFSHEAAKQVAFLGSLFVGALKAIAPILVFILVASSIANQKKNTQTNMRPIVVLYLFGTFAAALTAVLLSMMFPTNLVLVAGVEGTSPPQGIGEVLNTLLFKLVDNPVNALMTGNYIGILAWGVGLGLALHHASDSTKQVFADVSHGISQMVRFIIRLAPIGIFGLVAATFAETGFAAIAGYAKLLAVLLGAMAIIALIVNPLIVYVKIKRNPYPLVIRCLRESGVTAFFTRSSAANIPVNMALCEKLKLHEDTYSVSIPLGATINMGGAAITITVLTLAAAHTLGIQVDLLTALLLSVVAAISACGASGVAGGSLLLIPLACSLFGISNDVAMQVVAVGFIIGVIQDAAETALNSSTDVIFTAAACEAAENKAKLG.

Transmembrane regions (helical) follow at residues 11–31, 43–63, 82–102, 141–161, 192–212, 216–236, 290–310, 316–336, and 363–383; these read LANG…VSLA, FLGS…VFIL, IVVL…LLSM, ALMT…GLAL, IGIF…AIAG, LLAV…PLIV, IPLG…VLTL, LGIQ…AISA, and VAMQ…AAET.

Belongs to the dicarboxylate/amino acid:cation symporter (DAACS) (TC 2.A.23) family.

The protein resides in the cell inner membrane. It carries out the reaction L-serine(in) + Na(+)(in) = L-serine(out) + Na(+)(out). The catalysed reaction is L-threonine(in) + Na(+)(in) = L-threonine(out) + Na(+)(out). Involved in the import of serine and threonine into the cell, with the concomitant import of sodium (symport system). This is Serine/threonine transporter SstT from Shewanella sp. (strain MR-4).